The following is a 137-amino-acid chain: Altered inheritance of mitochondria protein 11 (137 aa).

2 helical membrane-spanning segments follow: residues 20–37 (YGAA…SRAI) and 66–88 (LTYA…CWAL).

The protein belongs to the AIM11 family.

It localises to the membrane. The chain is Altered inheritance of mitochondria protein 11 (AIM11) from Saccharomyces cerevisiae (strain RM11-1a) (Baker's yeast).